Here is a 74-residue protein sequence, read N- to C-terminus: ATP synthase subunit 9, mitochondrial (74 aa).

2 helical membrane passes run 8–28 and 50–70; these read IGAG…GNVF and ILGF…AFLI.

This sequence belongs to the ATPase C chain family. As to quaternary structure, F-type ATPases have 2 components, CF(1) - the catalytic core - and CF(0) - the membrane proton channel. CF(1) has five subunits: alpha(3), beta(3), gamma(1), delta(1), epsilon(1). CF(0) has three main subunits: a, b and c.

It is found in the mitochondrion membrane. In terms of biological role, this protein is one of the chains of the nonenzymatic membrane component (F0) of mitochondrial ATPase. The chain is ATP synthase subunit 9, mitochondrial (ATP9) from Brassica napus (Rape).